We begin with the raw amino-acid sequence, 422 residues long: Adhesin YadA (422 aa).

A signal peptide spans 1-25 (MTKDFKISVSAALISALFSSPYAFA). Positions 26-330 (NNDEVHFTAV…KKAIRESNQY (305 aa)) are surface exposed passenger domain. Residues 216–362 (EKTQENANKK…LASSAALNSL (147 aa)) are a coiled coil. The interval 331 to 369 (TDHKFHQLDNRLDKLDTRVDKGLASSAALNSLFQPYGVG) is outer membrane translocation of the passenger domain. 4 beta stranded membrane passes run 369 to 379 (GKVNFTAGVGG), 383 to 394 (SQALAIGSGYRV), 401 to 407 (KAGVAYA), and 411 to 422 (DVMYNASFNIEW). Positions 370–422 (KVNFTAGVGGYRSSQALAIGSGYRVNESVALKAGVAYAGSSDVMYNASFNIEW) are translocator domain.

Belongs to the autotransporter-2 (AT-2) (TC 1.B.40) family. In terms of assembly, homotrimer.

It is found in the cell surface. Its subcellular location is the cell outer membrane. Functionally, collagen-binding outer membrane protein forming a fibrillar matrix on the bacterial cell surface. Promotes initial attachment and invasion of eukaryotic cells. Also protects the bacteria by being responsible for agglutination, serum resistance, complement inactivation and phagocytosis resistance. The chain is Adhesin YadA (yadA) from Yersinia enterocolitica.